Reading from the N-terminus, the 271-residue chain is Mannosyl-3-phosphoglycerate phosphatase (271 aa).

Aspartate 13 functions as the Nucleophile in the catalytic mechanism. 3 residues coordinate Mg(2+): aspartate 13, aspartate 15, and aspartate 214.

It belongs to the HAD-like hydrolase superfamily. MPGP family. Requires Mg(2+) as cofactor.

It localises to the cytoplasm. It catalyses the reaction 2-O-(alpha-D-mannosyl)-3-phosphoglycerate + H2O = (2R)-2-O-(alpha-D-mannosyl)-glycerate + phosphate. The polypeptide is Mannosyl-3-phosphoglycerate phosphatase (Escherichia coli (strain SE11)).